The chain runs to 351 residues: Alanine racemase (351 aa).

The active-site Proton acceptor; specific for D-alanine is K35. K35 is modified (N6-(pyridoxal phosphate)lysine). Residue R127 coordinates substrate. Y247 serves as the catalytic Proton acceptor; specific for L-alanine. M295 contacts substrate.

This sequence belongs to the alanine racemase family. Pyridoxal 5'-phosphate is required as a cofactor.

It catalyses the reaction L-alanine = D-alanine. It participates in amino-acid biosynthesis; D-alanine biosynthesis; D-alanine from L-alanine: step 1/1. Catalyzes the interconversion of L-alanine and D-alanine. May also act on other amino acids. This Vesicomyosocius okutanii subsp. Calyptogena okutanii (strain HA) protein is Alanine racemase (alr).